A 527-amino-acid chain; its full sequence is DNA polymerase epsilon subunit 2 (527 aa).

The protein belongs to the DNA polymerase epsilon subunit B family. Component of the DNA polymerase epsilon complex consisting of four subunits: the catalytic subunit POLE and the accessory subunits POLE2, POLE3 and POLE4.

The protein resides in the nucleus. Its function is as follows. Accessory component of the DNA polymerase epsilon complex. Participates in DNA repair and in chromosomal DNA replication. This chain is DNA polymerase epsilon subunit 2 (POLE2), found in Bos taurus (Bovine).